The chain runs to 357 residues: Transcription factor unc-86 (357 aa).

A POU-IV box motif is present at residues arginine 35–isoleucine 44. In terms of domain architecture, POU-specific spans aspartate 155–glutamate 232. The homeobox DNA-binding region spans lysine 253–phenylalanine 312.

This sequence belongs to the POU transcription factor family. Class-4 subfamily. In terms of assembly, interacts with mec-3; the heterooligomer binds to the promoters of mec-3, mec-4 and mec-7. Specific to neurons and neuroblasts. Expressed in CEM head neurons and in IL2, URA, URB, URX and URY neurons. Not expressed in olfactory sensory neurons but expressed in AIZ interneurons.

Its subcellular location is the nucleus. Its function is as follows. Transcription factor required for correct cell fate determination and differentiation in diverse neuronal cell lineages where it plays a role in specifying the fate of daughter cells during cell divisions. Involved in sensory neuron production and function. Binds both alone and with mec-3 to the mec-3 promoter to initiate and maintain mec-3 expression which is required for sensory neuron differentiation. In addition, binds both alone and with mec-3 to the promoters of mec-4 and mec-7 which act to regulate sensory neuron function. Involved in determining the identity of the serotonergic NSM neurons and the cholinergic IL2 sensory and URA motor neurons. Promotes expression of the cfi-1 transcription factor in the URA and IL2 neurons which in turn activates normal URA and IL2 gene expression. Required to determine the identity of BDU sensory neurons in concert with transcription factor unc-86, regulating expression of a number of genes, including transcription factors ceh-14 and ahr-1, neuropeptides flp-10, nlp-1 and nlp-15, and tyramine receptor-encoding ser-2. Regulates expression of a number of genes in NSM neurons including bas-1, cat-1, dop-3, mgl-3, nlp-13, scd-2 and ptps-1. In the IL2 neurons, required for expression of cho-1, gcy-19, klp-6, lag-2, unc-5 and unc-17. Promotes expression of pkd-2 in the male-specific CEM head neurons. Required for dauer-specific branching of IL2Q neurons and nictation behavior. Controls both the timing and direction of axon outgrowth in HSN neurons. Plays a role in serotonin production by regulating expression of the tryptophan hydrolase tph-1 which catalyzes serotonin synthesis, in the AIM, NSM, HSN and RIH neurons. Involved in regulation of lin-11 expression in the AIZ interneurons, the major interneurons of the olfactory pathway, and is required for odortaxis behavior. Involved in neurite pruning between AIM neurons during larval development by regulating the expression of transcription factor mbr-1. Required for correct localization of unc-40. This is Transcription factor unc-86 (unc-86) from Caenorhabditis elegans.